We begin with the raw amino-acid sequence, 624 residues long: Elongation factor 4 (624 aa).

Positions 17–203 (ALIRNFCIIA…RVVRDVPAPV (187 aa)) constitute a tr-type G domain. GTP contacts are provided by residues 29–34 (DHGKST) and 150–153 (NKID).

This sequence belongs to the TRAFAC class translation factor GTPase superfamily. Classic translation factor GTPase family. LepA subfamily.

It is found in the cell membrane. It catalyses the reaction GTP + H2O = GDP + phosphate + H(+). Its function is as follows. Required for accurate and efficient protein synthesis under certain stress conditions. May act as a fidelity factor of the translation reaction, by catalyzing a one-codon backward translocation of tRNAs on improperly translocated ribosomes. Back-translocation proceeds from a post-translocation (POST) complex to a pre-translocation (PRE) complex, thus giving elongation factor G a second chance to translocate the tRNAs correctly. Binds to ribosomes in a GTP-dependent manner. In Streptomyces griseus subsp. griseus (strain JCM 4626 / CBS 651.72 / NBRC 13350 / KCC S-0626 / ISP 5235), this protein is Elongation factor 4.